The primary structure comprises 592 residues: Putative D-/L-hydantoinase subunit B (592 aa).

The protein belongs to the HyuB family. May form a complex with HyuA.

Its function is as follows. Involved in the asymmetric conversion of racemic 5-substituted hydantoins to the corresponding L-amino acids. HyuA and HyuB are both required for the conversion of D- and L-5-substituted hydantoins to corresponding N-carbamoyl-D- and N-carbamoyl-L-amino acids, respectively. This is Putative D-/L-hydantoinase subunit B from Pseudomonas sp. (strain NS671).